Reading from the N-terminus, the 137-residue chain is Large ribosomal subunit protein uL16 (137 aa).

Belongs to the universal ribosomal protein uL16 family. Part of the 50S ribosomal subunit.

In terms of biological role, binds 23S rRNA and is also seen to make contacts with the A and possibly P site tRNAs. This Pseudomonas paraeruginosa (strain DSM 24068 / PA7) (Pseudomonas aeruginosa (strain PA7)) protein is Large ribosomal subunit protein uL16.